A 131-amino-acid chain; its full sequence is uncharacterized protein (131 aa).

The interval 112-131 (LTDNPGAVRKSQKSLIPPYN) is disordered.

This is an uncharacterized protein from Fowl adenovirus A serotype 1 (strain CELO / Phelps) (FAdV-1).